Consider the following 230-residue polypeptide: Large ribosomal subunit protein uL1 (230 aa).

Belongs to the universal ribosomal protein uL1 family. Part of the 50S ribosomal subunit.

In terms of biological role, binds directly to 23S rRNA. The L1 stalk is quite mobile in the ribosome, and is involved in E site tRNA release. Protein L1 is also a translational repressor protein, it controls the translation of the L11 operon by binding to its mRNA. This is Large ribosomal subunit protein uL1 from Bradyrhizobium sp. (strain ORS 278).